Here is a 1704-residue protein sequence, read N- to C-terminus: Type-2 histone deacetylase 2 (1704 aa).

3 disordered regions span residues 1-303 (MSTN…SEER), 315-383 (TQGS…TSKK), and 540-634 (QFLQ…IGNS). Residues 15-69 (TTITNESNTDNNNNNNDDNKNNTENTTSPTNNNNTNDNDNNSDNNNNKNNNNNNS) are compositionally biased toward low complexity. Polar residues predominate over residues 70-81 (QVTEEQQVTLED). A compositionally biased stretch (acidic residues) spans 97–113 (DSAEEDEDEMEDDDEDA). A compositionally biased stretch (polar residues) spans 134–153 (KVQQSTNTHLSQTTPESPTI). Residues 165 to 176 (STSTNNTPNTQS) show a composition bias toward low complexity. Residues 186-195 (LTSDEEKDLM) are compositionally biased toward basic and acidic residues. Positions 196 to 210 (LSEESDGGVGEDDDS) are enriched in acidic residues. Positions 222-286 (NQSNQNQNNN…SNNDNNNNNN (65 aa)) are enriched in low complexity. Polar residues predominate over residues 315 to 325 (TQGSSTTTSDP). The segment covering 326-351 (NNQNNQINQINQNNQNNQNNQNNQNN) has biased composition (low complexity). The span at 354-369 (GEEEFGEEFEEEEEDM) shows a compositional bias: acidic residues. The span at 372–382 (PKKKTKYKTSK) shows a compositional bias: basic residues. 2 stretches are compositionally biased toward low complexity: residues 540 to 549 (QFLQQQQQQQ) and 561 to 580 (NSNN…NNNS). Over residues 608 to 620 (YETRKYTKKRNDE) the composition is skewed to basic and acidic residues. Positions 1165 and 1227 each coordinate substrate. 3 residues coordinate a divalent metal cation: D1256, H1258, and D1350. The disordered stretch occupies residues 1485–1704 (QLERQKQLQQ…TPQNINNSDN (220 aa)). Residues 1491-1616 (QLQQQQQQAQ…NNSNNNNNMN (126 aa)) are compositionally biased toward low complexity. Residues 1649-1669 (LSPNSVNRGNNPSNISMSGAQ) are compositionally biased toward polar residues. Residues 1677–1698 (SPKPSNSPNSPSTSNNNGTPQN) are compositionally biased toward low complexity.

Belongs to the histone deacetylase family. HD type 2 subfamily.

It is found in the nucleus. It localises to the cytoplasm. It carries out the reaction N(6)-acetyl-L-lysyl-[histone] + H2O = L-lysyl-[histone] + acetate. In terms of biological role, responsible for the deacetylation of lysine residues on the N-terminal part of the core histones (H2A, H2B, H3 and H4). Histone deacetylation plays an important role in transcriptional regulation, cell cycle progression and developmental events. Histone deacetylases act via the formation of large multiprotein complexes. In Dictyostelium discoideum (Social amoeba), this protein is Type-2 histone deacetylase 2 (hdaC).